The chain runs to 142 residues: MAKKIDAYIKLQVKSGSANPSPPVGPALGQKGVNIMEFCKAFNARTEKMEKGMPIPVVITVYSDRSFTFETKTPPASFLLKTAAGLKSGSPRPNTQKVGTIARAKIQEIAETKAADMTGADIEAMTRSIEGTARSMGLVVED.

It belongs to the universal ribosomal protein uL11 family. Part of the ribosomal stalk of the 50S ribosomal subunit. Interacts with L10 and the large rRNA to form the base of the stalk. L10 forms an elongated spine to which L12 dimers bind in a sequential fashion forming a multimeric L10(L12)X complex. One or more lysine residues are methylated.

Functionally, forms part of the ribosomal stalk which helps the ribosome interact with GTP-bound translation factors. The polypeptide is Large ribosomal subunit protein uL11 (Shewanella sp. (strain W3-18-1)).